The following is a 611-amino-acid chain: Leucine aminopeptidase 2 (611 aa).

Residues 135-137 and 265-270 contribute to the a peptide site; these read QCQ and PYGGME. Position 294 (His-294) interacts with Zn(2+). Glu-295 serves as the catalytic Proton acceptor. Residues His-298 and Glu-317 each coordinate Zn(2+). The active-site Proton donor is Tyr-383.

This sequence belongs to the peptidase M1 family. Zn(2+) is required as a cofactor.

The protein resides in the cytoplasm. The protein localises to the nucleus. It catalyses the reaction an epoxide + H2O = an ethanediol. Functionally, aminopeptidase that preferentially cleaves di- and tripeptides. Also has low epoxide hydrolase activity (in vitro). Can hydrolyze the epoxide leukotriene LTA(4) but it forms preferentially 5,6-dihydroxy-7,9,11,14-eicosatetraenoic acid rather than the cytokine leukotriene B(4) as the product compared to the homologous mammalian enzyme (in vitro). This is Leucine aminopeptidase 2 from Chaetomium globosum (strain ATCC 6205 / CBS 148.51 / DSM 1962 / NBRC 6347 / NRRL 1970) (Soil fungus).